We begin with the raw amino-acid sequence, 348 residues long: Phosphate acyltransferase (348 aa).

This sequence belongs to the PlsX family. As to quaternary structure, homodimer. Probably interacts with PlsY.

Its subcellular location is the cytoplasm. The enzyme catalyses a fatty acyl-[ACP] + phosphate = an acyl phosphate + holo-[ACP]. Its pathway is lipid metabolism; phospholipid metabolism. Its function is as follows. Catalyzes the reversible formation of acyl-phosphate (acyl-PO(4)) from acyl-[acyl-carrier-protein] (acyl-ACP). This enzyme utilizes acyl-ACP as fatty acyl donor, but not acyl-CoA. The protein is Phosphate acyltransferase of Nitrosomonas europaea (strain ATCC 19718 / CIP 103999 / KCTC 2705 / NBRC 14298).